The sequence spans 254 residues: Large ribosomal subunit protein uL15m (254 aa).

The N-terminal 78 residues, 1-78, are a transit peptide targeting the mitochondrion; it reads MFNILSRVCR…GSGQRRGRRI (78 aa). The disordered stretch occupies residues 44–104; sequence NYQSKKRVGR…KVGHSTGHLK (61 aa). Positions 64–79 are enriched in basic residues; it reads GRGHKGSGQRRGRRIK.

Belongs to the universal ribosomal protein uL15 family. As to quaternary structure, component of the mitochondrial large ribosomal subunit (mt-LSU). Mature yeast 74S mitochondrial ribosomes consist of a small (37S) and a large (54S) subunit. The 37S small subunit contains a 15S ribosomal RNA (15S mt-rRNA) and at least 32 different proteins. The 54S large subunit contains a 21S rRNA (21S mt-rRNA) and at least 45 different proteins.

The protein resides in the mitochondrion. Component of the mitochondrial ribosome (mitoribosome), a dedicated translation machinery responsible for the synthesis of mitochondrial genome-encoded proteins, including at least some of the essential transmembrane subunits of the mitochondrial respiratory chain. The mitoribosomes are attached to the mitochondrial inner membrane and translation products are cotranslationally integrated into the membrane. The chain is Large ribosomal subunit protein uL15m (mrpl10) from Schizosaccharomyces pombe (strain 972 / ATCC 24843) (Fission yeast).